An 859-amino-acid polypeptide reads, in one-letter code: Leucine--tRNA ligase (859 aa).

Residues 42–52 carry the 'HIGH' region motif; it reads PYPSGKLHMGH. The short motif at 618-622 is the 'KMSKS' region element; sequence KMSKS. Lys-621 provides a ligand contact to ATP.

It belongs to the class-I aminoacyl-tRNA synthetase family.

The protein resides in the cytoplasm. The catalysed reaction is tRNA(Leu) + L-leucine + ATP = L-leucyl-tRNA(Leu) + AMP + diphosphate. The chain is Leucine--tRNA ligase from Buchnera aphidicola subsp. Acyrthosiphon pisum (strain APS) (Acyrthosiphon pisum symbiotic bacterium).